We begin with the raw amino-acid sequence, 159 residues long: UPF0262 protein RD1_1069 (159 aa).

It belongs to the UPF0262 family.

The protein is UPF0262 protein RD1_1069 of Roseobacter denitrificans (strain ATCC 33942 / OCh 114) (Erythrobacter sp. (strain OCh 114)).